Consider the following 186-residue polypeptide: ADP-ribosylation factor-like protein 8B (186 aa).

The segment at residues 1 to 19 (MLALISRLLDWFRSLFWKE) is an intramembrane region (note=Mediates targeting to membranes). Residues 29–35 (QYSGKTT), 71–75 (DIGGQ), and 130–133 (NKRD) each bind GTP. A Glycyl lysine isopeptide (Lys-Gly) (interchain with G-Cter in ubiquitin) cross-link involves residue lysine 141.

This sequence belongs to the small GTPase superfamily. Arf family. In terms of assembly, interacts with tubulin. Interacts with BORCS5; recruits ARL8B to lysosomes. Interacts with VPS41; the interaction mediates the recruitment of the HOPS complex to lysosomes. Interacts (GTP-bound form) with PLEKHM2 (via RUN domain); the interaction is required to recruit the motor protein kinesin-1 on lysosomes. Interacts (GTP-bound form) with PLEKHM1 (via RUN domain); the interaction is required for PLEKHM1 localization to lysosomes and for ARL8B function in delivery and degradation of endocytic and autophagic cargo in lysosomes. PLEKHM1 and PLEKHM2 compete for interaction with ARL8B. Interacts (GTP-bound form) with RUFY1; the interaction is required for RUFY1 endosomal location. When GTP-bound, interacts with RUFY3 and RUFY4, but not with RUFY1, nor RUFY2. In terms of processing, ubiquitinated at Lys-141 by RNF167, leading to its degradation.

The protein localises to the late endosome membrane. Its subcellular location is the lysosome membrane. It localises to the cytoplasm. The protein resides in the cytoskeleton. It is found in the spindle. The protein localises to the cell projection. Its subcellular location is the axon. It localises to the synapse. The protein resides in the cytolytic granule membrane. It is found in the early endosome membrane. It carries out the reaction GTP + H2O = GDP + phosphate + H(+). In terms of biological role, small GTPase which cycles between active GTP-bound and inactive GDP-bound states. In its active state, binds to a variety of effector proteins playing a key role in the regulation of lysosomal positioning which is important for nutrient sensing, natural killer cell-mediated cytotoxicity and antigen presentation. Along with its effectors, orchestrates lysosomal transport and fusion. Localizes specifically to lysosomal membranes and mediates anterograde lysosomal motility by recruiting PLEKHM2, which in turn recruits the motor protein kinesin-1 on lysosomes. Required for lysosomal and cytolytic granule exocytosis. Critical factor involved in NK cell-mediated cytotoxicity. Drives the polarization of cytolytic granules and microtubule-organizing centers (MTOCs) toward the immune synapse between effector NK lymphocytes and target cells. In neurons, mediates the anterograde axonal long-range transport of presynaptic lysosome-related vesicles required for presynaptic biogenesis and synaptic function. Also acts as a regulator of endosome to lysosome trafficking pathways of special significance for host defense. Recruits RUFY1 onto early endosomes regulating endosomes to trans-Golgi network proteins retrieval. Regulates cargo trafficking to lysosomes by binding to PLEKHM1 and recruiting the HOPS subunit VPS41, resulting in functional assembly of the HOPS complex on lysosomal membranes. Plays an important role in cargo delivery to lysosomes for antigen presentation and microbial killing. Directs the intersection of CD1d with lipid antigens in lysosomes, and plays a role in intersecting phagosomes with lysosomes to generate phagolysosomes that kill microbes. Involved in the process of MHC II presentation. Regulates the delivery of antigens to lysosomes and the formation of MHC II-peptide complexes through the recruitment of the HOPS complex to lysosomes allowing the fusion of late endosomes to lysosomes. May play a role in chromosome segregation. The sequence is that of ADP-ribosylation factor-like protein 8B (ARL8B) from Bos taurus (Bovine).